The sequence spans 487 residues: Galactose-1-phosphate uridylyltransferase (487 aa).

It belongs to the galactose-1-phosphate uridylyltransferase type 2 family.

The protein localises to the cytoplasm. It carries out the reaction alpha-D-galactose 1-phosphate + UDP-alpha-D-glucose = alpha-D-glucose 1-phosphate + UDP-alpha-D-galactose. It functions in the pathway carbohydrate metabolism; galactose metabolism. This is Galactose-1-phosphate uridylyltransferase from Lactiplantibacillus plantarum (strain ATCC BAA-793 / NCIMB 8826 / WCFS1) (Lactobacillus plantarum).